A 154-amino-acid polypeptide reads, in one-letter code: Superoxide dismutase [Cu-Zn] (154 aa).

Residues His47, His49, and His64 each coordinate Cu cation. Cys58 and Cys147 are disulfide-bonded. Residues His64, His72, His81, and Asp84 each coordinate Zn(2+). Residue His121 coordinates Cu cation. Substrate is bound at residue Arg144.

Belongs to the Cu-Zn superoxide dismutase family. As to quaternary structure, homodimer. Cu cation is required as a cofactor. The cofactor is Zn(2+).

It is found in the cytoplasm. The catalysed reaction is 2 superoxide + 2 H(+) = H2O2 + O2. Its function is as follows. Destroys radicals which are normally produced within the cells and which are toxic to biological systems. The sequence is that of Superoxide dismutase [Cu-Zn] (SOD1) from Candida albicans (Yeast).